Consider the following 471-residue polypeptide: Tryptophan--tRNA ligase, cytoplasmic (471 aa).

Positions 8-64 constitute a WHEP-TRS domain; it reads SLLELFNSIATQGELVRSLKAGNASKDEIDSAVKMLVSLKMSYKAAAGEDYKADCPP. The disordered stretch occupies residues 59 to 79; it reads KADCPPGNPAPTSNHGPDATE. Lysine 154 carries the post-translational modification N6-succinyllysine. The short motif at 164 to 173 is the 'HIGH' region element; that stretch reads PSSEAMHVGH. The short motif at 349 to 353 is the 'KMSKS' region element; sequence KMSAS. Serine 351 carries the phosphoserine modification.

The protein belongs to the class-I aminoacyl-tRNA synthetase family. Homodimer. Interacts with an oxidized form of GAPDH. GAPDH stimulates the aminoacylation activity of isoform 2. Post-translationally, proteolytic cleavage generates 2 forms; T1-TrpRS and T2-TrpRS.

The protein resides in the cytoplasm. It carries out the reaction tRNA(Trp) + L-tryptophan + ATP = L-tryptophyl-tRNA(Trp) + AMP + diphosphate + H(+). Catalyzes the attachment of tryptophan to tRNA(Trp) in a two-step reaction: tryptophan is first activated by ATP to form Trp-AMP and then transferred to the acceptor end of the tRNA(Trp). Its function is as follows. Has no angiostatic activity. Functionally, possesses an angiostatic activity but has no aminoacylation activity. Inhibits fluid shear stress-activated responses of endothelial cells. Regulates ERK, Akt, and eNOS activation pathways that are associated with angiogenesis, cytoskeletal reorganization and shear stress-responsive gene expression. In terms of biological role, has an angiostatic activity. In Homo sapiens (Human), this protein is Tryptophan--tRNA ligase, cytoplasmic.